Here is a 224-residue protein sequence, read N- to C-terminus: Putative O-methyltransferase MMAR_4217 (224 aa).

Polar residues predominate over residues 1–11 (MHGTDSSSDTP). Residues 1–20 (MHGTDSSSDTPGQPAPSRAE) are disordered. Residues V51, E73, 75–76 (GT), S81, D99, and I100 each bind S-adenosyl-L-methionine. D147 is a substrate binding site. An S-adenosyl-L-methionine-binding site is contributed by D149.

This sequence belongs to the class I-like SAM-binding methyltransferase superfamily. Cation-dependent O-methyltransferase family.

In Mycobacterium marinum (strain ATCC BAA-535 / M), this protein is Putative O-methyltransferase MMAR_4217.